The following is a 251-amino-acid chain: MTVYFIGAGPGAADLITVRGQRLLQRCPVCLYAGSIMPDDLLAQCPPGATIVDTGPLTLEQIVRKLADADADGRDVARLHSGDPSLYSALAEQCRELDALGIGYEIVPGVPAFAAAAAALKRELTVPGVAQTVTLTRVATLSTPIPPGEDLAALARSRATLVLHLAAAQIDAIVPRLLDGGYRPETPVAVVAFASWPQQRTLRGTLADIAARMHDAKITRTAVIVVGDVLTAEGFTDSYLYSVARHGRYAQ.

It belongs to the precorrin methyltransferase family.

It catalyses the reaction precorrin-4 + S-adenosyl-L-methionine = precorrin-5 + S-adenosyl-L-homocysteine. It participates in cofactor biosynthesis; adenosylcobalamin biosynthesis; cob(II)yrinate a,c-diamide from precorrin-2 (aerobic route): step 4/10. In terms of biological role, catalyzes the methylation of C-11 in precorrin-4 to form precorrin-5. The chain is Precorrin-4 C(11)-methyltransferase (cobM) from Mycobacterium tuberculosis (strain CDC 1551 / Oshkosh).